We begin with the raw amino-acid sequence, 232 residues long: 2-C-methyl-D-erythritol 4-phosphate cytidylyltransferase (232 aa).

It belongs to the IspD/TarI cytidylyltransferase family. IspD subfamily.

The enzyme catalyses 2-C-methyl-D-erythritol 4-phosphate + CTP + H(+) = 4-CDP-2-C-methyl-D-erythritol + diphosphate. Its pathway is isoprenoid biosynthesis; isopentenyl diphosphate biosynthesis via DXP pathway; isopentenyl diphosphate from 1-deoxy-D-xylulose 5-phosphate: step 2/6. In terms of biological role, catalyzes the formation of 4-diphosphocytidyl-2-C-methyl-D-erythritol from CTP and 2-C-methyl-D-erythritol 4-phosphate (MEP). The sequence is that of 2-C-methyl-D-erythritol 4-phosphate cytidylyltransferase from Synechococcus elongatus (strain ATCC 33912 / PCC 7942 / FACHB-805) (Anacystis nidulans R2).